A 379-amino-acid chain; its full sequence is Cytochrome b (379 aa).

The next 4 membrane-spanning stretches (helical) occupy residues 33 to 53 (FGSLLGICLAVQILTGLFLAM), 77 to 98 (WILRYLHANGASMFFICLYIHV), 113 to 133 (WNIGVILLFAVMATAFMGYVL), and 178 to 198 (FFAFHFLLPFIISAMVMVHLL). Positions 83 and 97 each coordinate heme b. Histidine 182 and histidine 196 together coordinate heme b. Residue histidine 201 coordinates a ubiquinone. 4 consecutive transmembrane segments (helical) span residues 226-246 (IKDILGLLLMIMVLLMLVLFS), 288-308 (LGGVMALVLSILILIIIPVLH), 320-340 (LSQCLFWLLVADLLXVTWIGG), and 347-367 (YVIXGQLASIXXXXIXIXXXX).

Belongs to the cytochrome b family. In terms of assembly, the cytochrome bc1 complex contains 11 subunits: 3 respiratory subunits (MT-CYB, CYC1 and UQCRFS1), 2 core proteins (UQCRC1 and UQCRC2) and 6 low-molecular weight proteins (UQCRH/QCR6, UQCRB/QCR7, UQCRQ/QCR8, UQCR10/QCR9, UQCR11/QCR10 and a cleavage product of UQCRFS1). This cytochrome bc1 complex then forms a dimer. The cofactor is heme b.

It is found in the mitochondrion inner membrane. Its function is as follows. Component of the ubiquinol-cytochrome c reductase complex (complex III or cytochrome b-c1 complex) that is part of the mitochondrial respiratory chain. The b-c1 complex mediates electron transfer from ubiquinol to cytochrome c. Contributes to the generation of a proton gradient across the mitochondrial membrane that is then used for ATP synthesis. In Myotis goudotii (Malagasy mouse-eared bat), this protein is Cytochrome b (MT-CYB).